The chain runs to 690 residues: ATP-dependent DNA helicase Hel308 (690 aa).

ATP is bound by residues Gln-26 and 45–52 (IPTASGKT). One can recognise a Helicase ATP-binding domain in the interval 32–188 (AGYLESEDNY…WLDARVVEHD (157 aa)). The DEAH box motif lies at 133–136 (DEFH). A Helicase C-terminal domain is found at 208 to 417 (EKNDVVLKVL…NRDALYRQII (210 aa)).

The protein belongs to the helicase family. Hel308 subfamily. Monomer. Binds replication protein A (RPA), in presence and absence of DNA.

The enzyme catalyses Couples ATP hydrolysis with the unwinding of duplex DNA by translocating in the 3'-5' direction.. It catalyses the reaction ATP + H2O = ADP + phosphate + H(+). DNA-dependent ATPase and 3'-5' DNA helicase that may be involved in repair of stalled replication forks. Helicase with 3'-to 5'- polarity; able to unwind over 100 bp of DNA at 50 degrees Celsius. Unwinds forked DNA, preferentially on lagging strand forks; has weaker activity on Holliday junctions. Displaces the invading strand in DNA D-loops. Unwinds short oligonucleotides from dsDNA with 3'- but not blunt ends or 5'-ssDNA tails in an ATP-dependent manner. ATPase activity is stimulated by ssDNA but not dsDNA, protein binds ssDNA, dsDNA with 5'- or 3'-overhangs but not blunt ended dsDNA and replication forks. Replication forks bind both this protein and RPA. RPA does not stimulate the helicase activity of this protein. The polypeptide is ATP-dependent DNA helicase Hel308 (Methanothermobacter thermautotrophicus (strain ATCC 29096 / DSM 1053 / JCM 10044 / NBRC 100330 / Delta H) (Methanobacterium thermoautotrophicum)).